A 141-amino-acid polypeptide reads, in one-letter code: Hemoglobin subunit alpha (141 aa).

A Globin domain is found at 1-141 (VLSPADKTNV…VSTVLTSKYR (141 aa)). Ser3 bears the Phosphoserine mark. N6-succinyllysine is present on Lys7. Thr8 carries the post-translational modification Phosphothreonine. N6-succinyllysine is present on Lys11. Residue Ser35 is modified to Phosphoserine. Lys40 is modified (N6-succinyllysine). A Phosphoserine modification is found at Ser49. His58 contributes to the O2 binding site. His87 serves as a coordination point for heme b. Position 102 is a phosphoserine (Ser102). Thr108 is subject to Phosphothreonine. A Phosphoserine modification is found at Ser124. Phosphothreonine is present on residues Thr134 and Thr137. A Phosphoserine modification is found at Ser138.

This sequence belongs to the globin family. In terms of assembly, heterotetramer of two alpha chains and two beta chains. Red blood cells.

In terms of biological role, involved in oxygen transport from the lung to the various peripheral tissues. Its function is as follows. Hemopressin acts as an antagonist peptide of the cannabinoid receptor CNR1. Hemopressin-binding efficiently blocks cannabinoid receptor CNR1 and subsequent signaling. This Eulemur fulvus fulvus (Brown lemur) protein is Hemoglobin subunit alpha (HBA).